The primary structure comprises 319 residues: Acetyl-coenzyme A carboxylase carboxyl transferase subunit alpha (319 aa).

Positions 32–293 constitute a CoA carboxyltransferase C-terminal domain; it reads NIQEEISRLQ…HTALAEALQT (262 aa).

This sequence belongs to the AccA family. Acetyl-CoA carboxylase is a heterohexamer composed of biotin carboxyl carrier protein (AccB), biotin carboxylase (AccC) and two subunits each of ACCase subunit alpha (AccA) and ACCase subunit beta (AccD).

Its subcellular location is the cytoplasm. It catalyses the reaction N(6)-carboxybiotinyl-L-lysyl-[protein] + acetyl-CoA = N(6)-biotinyl-L-lysyl-[protein] + malonyl-CoA. It participates in lipid metabolism; malonyl-CoA biosynthesis; malonyl-CoA from acetyl-CoA: step 1/1. Component of the acetyl coenzyme A carboxylase (ACC) complex. First, biotin carboxylase catalyzes the carboxylation of biotin on its carrier protein (BCCP) and then the CO(2) group is transferred by the carboxyltransferase to acetyl-CoA to form malonyl-CoA. The chain is Acetyl-coenzyme A carboxylase carboxyl transferase subunit alpha from Thioalkalivibrio sulfidiphilus (strain HL-EbGR7).